Reading from the N-terminus, the 217-residue chain is Ribonuclease HII 2 (217 aa).

The 190-residue stretch at 28 to 217 (GLLAGVDEAG…VREVLLERRP (190 aa)) folds into the RNase H type-2 domain. Positions 34, 35, and 126 each coordinate a divalent metal cation.

Belongs to the RNase HII family. It depends on Mn(2+) as a cofactor. Mg(2+) is required as a cofactor.

The protein resides in the cytoplasm. It carries out the reaction Endonucleolytic cleavage to 5'-phosphomonoester.. Functionally, endonuclease that specifically degrades the RNA of RNA-DNA hybrids. The polypeptide is Ribonuclease HII 2 (Methylibium petroleiphilum (strain ATCC BAA-1232 / LMG 22953 / PM1)).